The following is a 256-amino-acid chain: ATP synthase peripheral stalk subunit b, mitochondrial (256 aa).

The N-terminal 42 residues, 1 to 42, are a transit peptide targeting the mitochondrion; sequence MLSRVVLSAAATAAPCLKNAAVLGPGVLQATRVFHTGQPRLA. Residue Lys131 is modified to N6-succinyllysine. 6 positions are modified to N6-acetyllysine: Lys139, Lys154, Lys162, Lys221, Lys233, and Lys244.

It belongs to the eukaryotic ATPase B chain family. Component of the ATP synthase complex composed at least of ATP5F1A/subunit alpha, ATP5F1B/subunit beta, ATP5MC1/subunit c (homooctomer), MT-ATP6/subunit a, MT-ATP8/subunit 8, ATP5ME/subunit e, ATP5MF/subunit f, ATP5MG/subunit g, ATP5MK/subunit k, ATP5MJ/subunit j, ATP5F1C/subunit gamma, ATP5F1D/subunit delta, ATP5F1E/subunit epsilon, ATP5PF/subunit F6, ATP5PB/subunit b, ATP5PD/subunit d, ATP5PO/subunit OSCP. ATP synthase complex consists of a soluble F(1) head domain (subunits alpha(3) and beta(3)) - the catalytic core - and a membrane F(0) domain - the membrane proton channel (subunits c, a, 8, e, f, g, k and j). These two domains are linked by a central stalk (subunits gamma, delta, and epsilon) rotating inside the F1 region and a stationary peripheral stalk (subunits F6, b, d, and OSCP).

The protein localises to the mitochondrion. It is found in the mitochondrion inner membrane. Functionally, subunit b, of the mitochondrial membrane ATP synthase complex (F(1)F(0) ATP synthase or Complex V) that produces ATP from ADP in the presence of a proton gradient across the membrane which is generated by electron transport complexes of the respiratory chain. ATP synthase complex consist of a soluble F(1) head domain - the catalytic core - and a membrane F(1) domain - the membrane proton channel. These two domains are linked by a central stalk rotating inside the F(1) region and a stationary peripheral stalk. During catalysis, ATP synthesis in the catalytic domain of F(1) is coupled via a rotary mechanism of the central stalk subunits to proton translocation. In vivo, can only synthesize ATP although its ATP hydrolase activity can be activated artificially in vitro. Part of the complex F(0) domain. Part of the complex F(0) domain and the peripheric stalk, which acts as a stator to hold the catalytic alpha(3)beta(3) subcomplex and subunit a/ATP6 static relative to the rotary elements. This is ATP synthase peripheral stalk subunit b, mitochondrial from Rattus norvegicus (Rat).